The sequence spans 386 residues: Putative F-box/kelch-repeat protein At4g11750 (386 aa).

The F-box domain occupies 5 to 51; it reads PVDLPYIPDDLLLNCLARVSRLYYPILSLVSKRFRSLVASLELYEIR. Kelch repeat units lie at residues 187 to 236, 238 to 285, and 287 to 324; these read KIYV…VYDG, LYLF…YGRS, and VLMW…GYSG.

The protein is Putative F-box/kelch-repeat protein At4g11750 of Arabidopsis thaliana (Mouse-ear cress).